A 174-amino-acid chain; its full sequence is ATP synthase subunit d, mitochondrial (174 aa).

Ser-2 bears the N-acetylserine mark.

Belongs to the ATPase d subunit family. F-type ATPases have 2 components, CF(1) - the catalytic core - and CF(0) - the membrane proton channel. In yeast, the dimeric form of ATP synthase consists of 17 polypeptides: alpha, beta, gamma, delta, epsilon, 4 (B), 5 (OSCP), 6 (A), 8, 9 (C), d, E (Tim11), f, g, h, i/j and k.

The protein resides in the mitochondrion. It localises to the mitochondrion inner membrane. Its function is as follows. Mitochondrial membrane ATP synthase (F(1)F(0) ATP synthase or Complex V) produces ATP from ADP in the presence of a proton gradient across the membrane which is generated by electron transport complexes of the respiratory chain. F-type ATPases consist of two structural domains, F(1) - containing the extramembraneous catalytic core, and F(0) - containing the membrane proton channel, linked together by a central stalk and a peripheral stalk. During catalysis, ATP synthesis in the catalytic domain of F(1) is coupled via a rotary mechanism of the central stalk subunits to proton translocation. Part of the complex F(0) domain and the peripheric stalk, which acts as a stator to hold the catalytic alpha(3)beta(3) subcomplex and subunit a/ATP6 static relative to the rotary elements. This is ATP synthase subunit d, mitochondrial (ATP7) from Saccharomyces cerevisiae (strain ATCC 204508 / S288c) (Baker's yeast).